The following is a 90-amino-acid chain: Small regulatory polypeptide of amino acid response (90 aa).

Topologically, residues 1 to 18 are lumenal; it reads MGAKAPRGPKVAQWAMET. Residues 19–39 traverse the membrane as a helical segment; it reads AVIGVVVVLFVVTVAITCVLC. At 40 to 90 the chain is on the cytoplasmic side; it reads CFSCDSRAQDPQGGPGRSFTVATFRQEASLFTGPVRHAQPVPSAQDFWTFM.

Interacts with components of the lysosomal V-ATPase complex. Interacts with ATP6V0A1. Interacts with ATP6V0A2. In terms of tissue distribution, highly expressed in lung, heart and skeletal muscle.

Its subcellular location is the late endosome membrane. It localises to the lysosome membrane. In terms of biological role, negative regulator of amino acid sensing and mTORC1, a signaling complex promoting cell growth in response to growth factors, energy levels and amino acids. Negatively regulates mTORC1 activation by inhibiting recruitment of mTORC1 to lysosomes upon stimulation with amino acids: acts by promoting the formation of a tightly bound supercomplex composed of the lysosomal V-ATPase, Ragulator and Rag GTPases, preventing recruitment of mTORC1. Acts as a regulator of muscle regeneration following injury by regulating mTORC1 activation. The protein is Small regulatory polypeptide of amino acid response of Homo sapiens (Human).